A 420-amino-acid polypeptide reads, in one-letter code: Type II methyltransferase M.NmeDI (420 aa).

Residues 1–23 (MMSLKIQPAVPKKSDKPSATNRD) are disordered. Positions 56–411 (TLIFSFFSGA…MTLKSYLENH (356 aa)) constitute an SAM-dependent MTase C5-type domain. C148 is an active-site residue.

This sequence belongs to the class I-like SAM-binding methyltransferase superfamily. C5-methyltransferase family.

The catalysed reaction is a 2'-deoxycytidine in DNA + S-adenosyl-L-methionine = a 5-methyl-2'-deoxycytidine in DNA + S-adenosyl-L-homocysteine + H(+). Its function is as follows. A methylase that recognizes the double-stranded sequence 5'-RCCGGB-3', methylates C-2 on both strands, and protects the DNA from cleavage by the NmeDI endonuclease. This is Type II methyltransferase M.NmeDI (nmeDIMP) from Neisseria meningitidis serogroup C.